The following is a 510-amino-acid chain: Lysine--tRNA ligase (510 aa).

Positions 420 and 427 each coordinate Mg(2+).

Belongs to the class-II aminoacyl-tRNA synthetase family. As to quaternary structure, homodimer. It depends on Mg(2+) as a cofactor.

It is found in the cytoplasm. The enzyme catalyses tRNA(Lys) + L-lysine + ATP = L-lysyl-tRNA(Lys) + AMP + diphosphate. The protein is Lysine--tRNA ligase of Psychrobacter sp. (strain PRwf-1).